The following is a 408-amino-acid chain: Serine/threonine transporter SstT (408 aa).

10 helical membrane-spanning segments follow: residues 15-35, 49-69, 85-105, 142-162, 192-212, 218-238, 246-268, 289-309, 317-337, and 362-382; these read MGLI…AVIW, FISA…TAAI, LLYV…SFVF, ALME…GLML, PLGI…GALL, LAVI…LIVF, YPLV…SSAA, ISIP…ISVI, LGIP…SIAA, and TEVA…QDST.

It belongs to the dicarboxylate/amino acid:cation symporter (DAACS) (TC 2.A.23) family.

The protein resides in the cell inner membrane. The enzyme catalyses L-serine(in) + Na(+)(in) = L-serine(out) + Na(+)(out). The catalysed reaction is L-threonine(in) + Na(+)(in) = L-threonine(out) + Na(+)(out). Functionally, involved in the import of serine and threonine into the cell, with the concomitant import of sodium (symport system). In Marinobacter nauticus (strain ATCC 700491 / DSM 11845 / VT8) (Marinobacter aquaeolei), this protein is Serine/threonine transporter SstT.